A 38-amino-acid polypeptide reads, in one-letter code: Potassium channel toxin alpha-KTx 3.7 (38 aa).

3 cysteine pairs are disulfide-bonded: cysteine 8-cysteine 28, cysteine 14-cysteine 33, and cysteine 18-cysteine 35.

This sequence belongs to the short scorpion toxin superfamily. Potassium channel inhibitor family. Alpha-KTx 03 subfamily. In terms of tissue distribution, expressed by the venom gland.

The protein resides in the secreted. Functionally, blocks voltage-gated potassium channels Kv1.1/KCNA1 (IC(50)=0.6 nM), Kv1.2/KCNA2 (IC(50)=5.4 nM), Kv1.3/KCNA3 (IC(50)=0.014 nM) potently, and moderately block intermediate conductance calcium-activated potassium channels KCa3.1/KCNN4 (IC(50)=225 nM). Also shows activity on muscle-type nicotinic acetylcholine receptor (nAChR), since it reversibly and dose-dependently inhibits acetylcholine-induced current through mouse muscle-type nAChR heterologously expressed in Xenopus oocytes (IC(50)=1.6 uM). This Orthochirus scrobiculosus (Central Asian scorpion) protein is Potassium channel toxin alpha-KTx 3.7.